We begin with the raw amino-acid sequence, 167 residues long: Large ribosomal subunit protein uL10 (167 aa).

The protein belongs to the universal ribosomal protein uL10 family. In terms of assembly, part of the ribosomal stalk of the 50S ribosomal subunit. The N-terminus interacts with L11 and the large rRNA to form the base of the stalk. The C-terminus forms an elongated spine to which L12 dimers bind in a sequential fashion forming a multimeric L10(L12)X complex.

Functionally, forms part of the ribosomal stalk, playing a central role in the interaction of the ribosome with GTP-bound translation factors. The chain is Large ribosomal subunit protein uL10 from Erwinia tasmaniensis (strain DSM 17950 / CFBP 7177 / CIP 109463 / NCPPB 4357 / Et1/99).